The chain runs to 133 residues: Ubiquitin-like FUBI-ribosomal protein eS30 fusion protein (133 aa).

Positions 84–110 (GKVRGQTPKVAKQEKKKKKTGRAKRRM) are disordered. The span at 97–110 (EKKKKKTGRAKRRM) shows a compositional bias: basic residues. Lys125 bears the N6-succinyllysine mark.

This sequence in the N-terminal section; belongs to the ubiquitin family. In the C-terminal section; belongs to the eukaryotic ribosomal protein eS30 family. As to quaternary structure, component of the 40S subunit of the ribosome. In terms of processing, FUBI is cleaved from ribosomal protein S30 by the deubiquitinase USP36 before the assembly of ribosomal protein S30 into pre-40S ribosomal particles. FUBI removal from ribosomal protein S30 is a crucial event for the final maturation of pre-40S particles.

It localises to the nucleus. It is found in the cytoplasm. Its function is as follows. May have pro-apoptotic activity. In terms of biological role, component of the 40S subunit of the ribosome. Contributes to the assembly and function of 40S ribosomal subunits. This Mus musculus (Mouse) protein is Ubiquitin-like FUBI-ribosomal protein eS30 fusion protein (Fau).